Reading from the N-terminus, the 447-residue chain is Phosphatidylinositol 4-kinase type 2-alpha (447 aa).

The segment at 1 to 77 is disordered; the sequence is MDETSPLVSP…HRNEFPEDPE (77 aa). The segment covering 48-77 has biased composition (basic and acidic residues); sequence RSRERQPLLDRDRGASPRDPHRNEFPEDPE. One can recognise a PI3K/PI4K catalytic domain in the interval 92–421; sequence GIYPERIYQG…VQMPPVIVET (330 aa). The interval 98 to 104 is G-loop; the sequence is IYQGSSG. ATP-binding positions include 99–105 and Lys-120; that span reads YQGSSGS. An important for substrate binding region spans residues 125–127; that stretch reads EPY. Residues 133-146 form an important for interaction with membranes region; the sequence is KWTKWLQKLCCPCC. S-palmitoyl cysteine attachment occurs at residues Cys-142, Cys-143, Cys-145, and Cys-146. An ATP-binding site is contributed by 229-232; that stretch reads QIFV. The interval 236 to 244 is important for interaction with membranes; the sequence is KDADFWLRR. The segment at 273–281 is catalytic loop; sequence RNTDRGNDN. The tract at residues 312–332 is activation loop; that stretch reads AIDNGLAFPLKHPDSWRAYPF. Residue Asp-314 participates in ATP binding. The important for interaction with membranes stretch occupies residues 327–336; the sequence is WRAYPFYWAW.

The protein belongs to the PI3/PI4-kinase family. Type II PI4K subfamily.

The protein localises to the golgi apparatus. The protein resides in the trans-Golgi network membrane. It is found in the membrane raft. Its subcellular location is the endosome. It localises to the cytoplasmic vesicle. The protein localises to the cell projection. The protein resides in the dendrite. It is found in the presynaptic cell membrane. Its subcellular location is the synapse. It localises to the synaptosome. The protein localises to the mitochondrion. The protein resides in the membrane. It is found in the cell membrane. Its subcellular location is the perikaryon. It localises to the neuron projection. It catalyses the reaction a 1,2-diacyl-sn-glycero-3-phospho-(1D-myo-inositol) + ATP = a 1,2-diacyl-sn-glycero-3-phospho-(1D-myo-inositol 4-phosphate) + ADP + H(+). Functionally, membrane-bound phosphatidylinositol-4 kinase (PI4-kinase) that catalyzes the phosphorylation of phosphatidylinositol (PI) to phosphatidylinositol 4-phosphate (PI4P), a lipid that plays important roles in endocytosis, Golgi function, protein sorting and membrane trafficking. Besides, phosphorylation of phosphatidylinositol (PI) to phosphatidylinositol 4-phosphate (PI4P) is the first committed step in the generation of phosphatidylinositol 4,5-bisphosphate (PIP2), a precursor of the second messenger inositol 1,4,5-trisphosphate (InsP3). This chain is Phosphatidylinositol 4-kinase type 2-alpha (pi4k2a), found in Danio rerio (Zebrafish).